The primary structure comprises 229 residues: Potassium/proton antiporter CemA (229 aa).

The next 3 membrane-spanning stretches (helical) occupy residues A6–C26, I107–G127, and I189–I209.

It belongs to the CemA family.

The protein resides in the plastid. The protein localises to the chloroplast inner membrane. It catalyses the reaction K(+)(in) + H(+)(out) = K(+)(out) + H(+)(in). Its function is as follows. Contributes to K(+)/H(+) antiport activity by supporting proton efflux to control proton extrusion and homeostasis in chloroplasts in a light-dependent manner to modulate photosynthesis. Prevents excessive induction of non-photochemical quenching (NPQ) under continuous-light conditions. Indirectly promotes efficient inorganic carbon uptake into chloroplasts. In Lepidium virginicum (Virginia pepperweed), this protein is Potassium/proton antiporter CemA.